The sequence spans 349 residues: Rhodopsin (349 aa).

The Extracellular segment spans residues 1–33; it reads TEGPYFYIPMSNATGIVRSPYEYPQYYLVYPAA. Residue Asn-12 is glycosylated (N-linked (GlcNAc...) asparagine). The chain crosses the membrane as a helical span at residues 34-58; it reads YAVLGAYMFFLIIFGFPVNFLTLYV. At 59 to 70 the chain is on the cytoplasmic side; sequence TIEHKKLRTPLN. A helical transmembrane segment spans residues 71 to 93; the sequence is YILLNLAVADLFMVIGGFTTTIY. Residues 94–107 lie on the Extracellular side of the membrane; sequence TSMHGYFVLGRLGC. A disulfide bridge connects residues Cys-107 and Cys-184. Residues 108 to 130 form a helical membrane-spanning segment; sequence NLEGFSATLGGMIGLWSLVVLAI. The short motif at 131 to 133 is the 'Ionic lock' involved in activated form stabilization element; sequence ERW. The Cytoplasmic segment spans residues 131–149; it reads ERWVVVCKPMSNFRFGENH. The helical transmembrane segment at 150–170 threads the bilayer; it reads AIMGVTLTWVMGLACTVPPLV. At 171–199 the chain is on the extracellular side; the sequence is GWSRYIPEGMQCSCGIDYYTRAEGFNNDS. Asn-197 carries an N-linked (GlcNAc...) asparagine glycan. The chain crosses the membrane as a helical span at residues 200 to 221; the sequence is YVLYMFVCHFLIPLVVIFFCYG. Topologically, residues 222–249 are cytoplasmic; that stretch reads RLLCAVKEAAAAQQESETTQRAEREVTR. A helical membrane pass occupies residues 250–271; that stretch reads MVILMVIGFLVCWLPYASVAWY. Residues 272 to 283 are Extracellular-facing; it reads IFTHQGSEFGPL. Residues 284–305 traverse the membrane as a helical segment; that stretch reads FMTIPAFFAKSSSIYNPVIYIC. N6-(retinylidene)lysine is present on Lys-293. Residues 306–349 are Cytoplasmic-facing; sequence MNKQFRQCMLTTLFCGKNPFEEEEGASSTKTEASSASSSSVSPA. Cys-320 carries S-palmitoyl cysteine lipidation. The interval 326-349 is disordered; sequence EEEEGASSTKTEASSASSSSVSPA. Residues 331-349 are compositionally biased toward low complexity; sequence ASSTKTEASSASSSSVSPA.

Belongs to the G-protein coupled receptor 1 family. Opsin subfamily. Phosphorylated on some or all of the serine and threonine residues present in the C-terminal region. Post-translationally, contains one covalently linked retinal chromophore.

It localises to the membrane. Its subcellular location is the cell projection. The protein localises to the cilium. It is found in the photoreceptor outer segment. Photoreceptor required for image-forming vision at low light intensity. While most salt water fish species use retinal as chromophore, most freshwater fish use 3-dehydroretinal, or a mixture of retinal and 3-dehydroretinal. Light-induced isomerization of 11-cis to all-trans retinal triggers a conformational change that activates signaling via G-proteins. Subsequent receptor phosphorylation mediates displacement of the bound G-protein alpha subunit by arrestin and terminates signaling. This Myripristis violacea (Lattice soldierfish) protein is Rhodopsin (rho).